We begin with the raw amino-acid sequence, 289 residues long: (3R)-3-[(carboxymethyl)amino]fatty acid oxygenase/decarboxylase (289 aa).

Tyr-65, Tyr-70, and Gly-93 together coordinate a (3R)-3-[(carboxymethyl)amino]fatty acid. Fe(2+)-binding residues include His-97 and Asp-99. Residues Tyr-100 and Lys-158 each contribute to the a (3R)-3-[(carboxymethyl)amino]fatty acid site. Residue His-260 participates in Fe(2+) binding. Residue His-264 coordinates 2-oxoglutarate. Arg-275 contributes to the a (3R)-3-[(carboxymethyl)amino]fatty acid binding site.

The protein belongs to the TfdA dioxygenase family. The cofactor is Fe(2+).

The catalysed reaction is a (3R)-3-[(carboxymethyl)amino]fatty acid + 2 2-oxoglutarate + 2 O2 = a (3R)-3-isocyanyl-fatty acid + 2 succinate + 3 CO2 + 2 H2O. It catalyses the reaction a (3R)-3-[(carboxymethyl)amino]fatty acid + 2-oxoglutarate + O2 = a (3R)-3-{[carboxy(hydroxy)methyl]amino}fatty acid + succinate + CO2. It carries out the reaction a (3R)-3-{[carboxy(hydroxy)methyl]amino}fatty acid + 2-oxoglutarate + O2 = a (3R)-3-isocyanyl-fatty acid + succinate + 2 CO2 + 2 H2O. Its function is as follows. Involved in the biosynthesis of a unique class of isonitrile lipopeptides (INLPs) that seem to play a role in metal acquisition in M.marinum. Catalyzes the conversion of (3R)-3-[(carboxymethyl)amino]fatty acids to (3R)-3-isocyanyl-fatty acids through an oxidative decarboxylation mechanism, thereby generating the isonitrile group of INLPs. The protein is (3R)-3-[(carboxymethyl)amino]fatty acid oxygenase/decarboxylase of Mycobacterium marinum (strain ATCC BAA-535 / M).